We begin with the raw amino-acid sequence, 274 residues long: Proteasome subunit beta type-7-B (274 aa).

The propeptide at 1-37 (MSQSSVDIPPKGGFSFDLCKRNDMLTQKGLKAPSFLK) is removed in mature form. Thr40 serves as the catalytic Nucleophile.

This sequence belongs to the peptidase T1B family. As to quaternary structure, component of the 20S core complex of the 26S proteasome. The 26S proteasome is composed of a core protease (CP), known as the 20S proteasome, capped at one or both ends by the 19S regulatory particle (RP/PA700). The 20S proteasome core is composed of 28 subunits that are arranged in four stacked rings, resulting in a barrel-shaped structure. The two end rings are each formed by seven alpha subunits, and the two central rings are each formed by seven beta subunits. The catalytic chamber with the active sites is on the inside of the barrel.

It localises to the cytoplasm. Its subcellular location is the nucleus. It carries out the reaction Cleavage of peptide bonds with very broad specificity.. In terms of biological role, the proteasome is a multicatalytic proteinase complex which is characterized by its ability to cleave peptides with Arg, Phe, Tyr, Leu, and Glu adjacent to the leaving group at neutral or slightly basic pH. The proteasome has an ATP-dependent proteolytic activity. The chain is Proteasome subunit beta type-7-B (PBB2) from Arabidopsis thaliana (Mouse-ear cress).